The primary structure comprises 100 residues: Small ribosomal subunit protein uS14 (100 aa).

This sequence belongs to the universal ribosomal protein uS14 family. Part of the 30S ribosomal subunit. Contacts proteins S3 and S10.

Its function is as follows. Binds 16S rRNA, required for the assembly of 30S particles and may also be responsible for determining the conformation of the 16S rRNA at the A site. This chain is Small ribosomal subunit protein uS14, found in Prochlorococcus marinus (strain MIT 9215).